The following is a 587-amino-acid chain: MEGADACRSNGASPEARDTRSPPGPSGSLENGTKADSKDTKTTNGHSGEVTEGKTLGSALKSGEGKSGLFSSNEWRRPIIQFVESVDDKGSSYFSMDSAEGRRSPYAGLQLGASKKPPVTFAEKGELRKSIFSEPRKPTVTIVEPGEVRRNSYPRADSSLLARAKSGSEEVLCDSCIGNKQKAVKSCLVCQASFCELHLKPHLEGAAFRDHQLLEPIRDFEARKCPLHGKTMELFCQTDQTCICYLCMFQEHKNHSTVTVEEAKAEKETELSLQKEQLQLKIIEIEDDVEKWQKEKDRIKSFTTNEKAILEQNFRDLVRELEKQKEEVRAALEQREQDAVDQVKVIVDALDERAKVLHEDKQTREQLHNISDSVLFLQEFGALMSNYSLPPPLPTYHVLLEGEGLGQSLGNCKDDLLNVCMRHVEKMCKADLSRNFIERNHMENGGDHRYMNSYTSSYGNEWSTPDTMKRYSMYLTPKGGGRTSYQPSSPSRLSKETNQKNFNNLYGTKGNYTSRVWEYTSTVQNSEDMPTVQGNSSFSLKGFPSLLRSQVPKAQPQTWKSGKQTLLSHYRPFYVNKGSGIGSNEAP.

The segment at 1–71 is disordered; that stretch reads MEGADACRSN…SGEGKSGLFS (71 aa). Phosphoserine occurs at positions 21, 28, 58, and 104. At tyrosine 106 the chain carries Phosphotyrosine. A B box-type zinc finger spans residues 220-260; it reads FEARKCPLHGKTMELFCQTDQTCICYLCMFQEHKNHSTVTV. The Zn(2+) site is built by cysteine 225, histidine 228, cysteine 247, and histidine 252. The stretch at 259 to 348 forms a coiled coil; that stretch reads TVEEAKAEKE…AVDQVKVIVD (90 aa). Phosphothreonine is present on threonine 476. Serine 489 carries the post-translational modification Phosphoserine.

Interacts with VIM and HINT1. Interacts with IKBKG/NEMO. Interacts with STING1.

The protein localises to the cytoplasm. It localises to the lysosome. In terms of biological role, plays a crucial role in the regulation of macrophage activation in response to viral or bacterial infections within the respiratory tract. Mechanistically, TRIM29 interacts with IKBKG/NEMO in the lysosome where it induces its 'Lys-48' ubiquitination and subsequent degradation. In turn, the expression of type I interferons and the production of pro-inflammatory cytokines are inhibited. Additionally, induces the 'Lys-48' ubiquitination of STING1 in a similar way, leading to its degradation. The sequence is that of Tripartite motif-containing protein 29 (Trim29) from Mus musculus (Mouse).